A 315-amino-acid chain; its full sequence is Lipoyl synthase (315 aa).

7 residues coordinate [4Fe-4S] cluster: Cys63, Cys68, Cys74, Cys89, Cys93, Cys96, and Ser303. Residues 75-292 (FSKGTATFMI…EEKAYEMGFV (218 aa)) form the Radical SAM core domain.

This sequence belongs to the radical SAM superfamily. Lipoyl synthase family. [4Fe-4S] cluster is required as a cofactor.

The protein resides in the cytoplasm. The catalysed reaction is [[Fe-S] cluster scaffold protein carrying a second [4Fe-4S](2+) cluster] + N(6)-octanoyl-L-lysyl-[protein] + 2 oxidized [2Fe-2S]-[ferredoxin] + 2 S-adenosyl-L-methionine + 4 H(+) = [[Fe-S] cluster scaffold protein] + N(6)-[(R)-dihydrolipoyl]-L-lysyl-[protein] + 4 Fe(3+) + 2 hydrogen sulfide + 2 5'-deoxyadenosine + 2 L-methionine + 2 reduced [2Fe-2S]-[ferredoxin]. It functions in the pathway protein modification; protein lipoylation via endogenous pathway; protein N(6)-(lipoyl)lysine from octanoyl-[acyl-carrier-protein]: step 2/2. Its function is as follows. Catalyzes the radical-mediated insertion of two sulfur atoms into the C-6 and C-8 positions of the octanoyl moiety bound to the lipoyl domains of lipoate-dependent enzymes, thereby converting the octanoylated domains into lipoylated derivatives. The protein is Lipoyl synthase of Chromobacterium violaceum (strain ATCC 12472 / DSM 30191 / JCM 1249 / CCUG 213 / NBRC 12614 / NCIMB 9131 / NCTC 9757 / MK).